The primary structure comprises 389 residues: 26S proteasome non-ATPase regulatory subunit 6 (389 aa).

Residues 193 to 361 (DFKQAAELFL…EVVETNRPDS (169 aa)) enclose the PCI domain.

It belongs to the proteasome subunit S10 family. As to quaternary structure, component of the 19S proteasome regulatory particle complex. The 26S proteasome consists of a 20S core particle (CP) and two 19S regulatory subunits (RP). The regulatory particle is made of a lid composed of 9 subunits including PSMD6, a base containing 6 ATPases and few additional components.

Its function is as follows. Component of the 26S proteasome, a multiprotein complex involved in the ATP-dependent degradation of ubiquitinated proteins. This complex plays a key role in the maintenance of protein homeostasis by removing misfolded or damaged proteins, which could impair cellular functions, and by removing proteins whose functions are no longer required. Therefore, the proteasome participates in numerous cellular processes, including cell cycle progression, apoptosis, or DNA damage repair. The chain is 26S proteasome non-ATPase regulatory subunit 6 (PSMD6) from Bos taurus (Bovine).